We begin with the raw amino-acid sequence, 100 residues long: Urease subunit gamma (100 aa).

This sequence belongs to the urease gamma subunit family. Heterotrimer of UreA (gamma), UreB (beta) and UreC (alpha) subunits. Three heterotrimers associate to form the active enzyme.

It is found in the cytoplasm. The catalysed reaction is urea + 2 H2O + H(+) = hydrogencarbonate + 2 NH4(+). It functions in the pathway nitrogen metabolism; urea degradation; CO(2) and NH(3) from urea (urease route): step 1/1. This chain is Urease subunit gamma, found in Kocuria rhizophila (strain ATCC 9341 / DSM 348 / NBRC 103217 / DC2201).